The following is a 110-amino-acid chain: Large ribosomal subunit protein uL22 (110 aa).

This sequence belongs to the universal ribosomal protein uL22 family. As to quaternary structure, part of the 50S ribosomal subunit.

Its function is as follows. This protein binds specifically to 23S rRNA; its binding is stimulated by other ribosomal proteins, e.g. L4, L17, and L20. It is important during the early stages of 50S assembly. It makes multiple contacts with different domains of the 23S rRNA in the assembled 50S subunit and ribosome. Functionally, the globular domain of the protein is located near the polypeptide exit tunnel on the outside of the subunit, while an extended beta-hairpin is found that lines the wall of the exit tunnel in the center of the 70S ribosome. The polypeptide is Large ribosomal subunit protein uL22 (Janthinobacterium sp. (strain Marseille) (Minibacterium massiliensis)).